We begin with the raw amino-acid sequence, 291 residues long: Taste receptor type 2 member 16 (291 aa).

A topological domain (extracellular) is located at residue methionine 1. Residues 2-22 form a helical membrane-spanning segment; that stretch reads IPIQLTVFFMIIYVLESLTII. The Cytoplasmic segment spans residues 23–41; the sequence is VQSSLIVAVLGREWLQVRR. The helical transmembrane segment at 42–62 threads the bilayer; it reads LMPVDMILISLGISRFCLQWA. The Extracellular portion of the chain corresponds to 63 to 84; the sequence is SMLNBFCSYFNLNYVLCNLTIT. Asparagine 80 carries N-linked (GlcNAc...) asparagine glycosylation. A helical transmembrane segment spans residues 85–105; that stretch reads WEFFNILTFWLNSLLTVFYCI. Residues 106–125 are Cytoplasmic-facing; the sequence is KVSSFTHHIFLWLRWRILRL. A helical transmembrane segment spans residues 126–146; sequence FPWILLGSLMITCVTIIPSAI. The Extracellular portion of the chain corresponds to 147-182; it reads GNYIQIQLLTMEHLPRNSTVTDKLEKFHQYEFQAHT. N-linked (GlcNAc...) asparagine glycosylation is present at asparagine 163. Residues 183-203 form a helical membrane-spanning segment; sequence VALVIPFILFLASTILLMASL. At 204–228 the chain is on the cytoplasmic side; the sequence is TKQIQHHSTGHCNPSMKAHFTALRS. The helical transmembrane segment at 229–249 threads the bilayer; sequence LAVLFIVFTSYFLTILITIIG. The Extracellular segment spans residues 250–257; the sequence is TLFDRRCW. Residues 258–278 form a helical membrane-spanning segment; that stretch reads LWVWEAFVYAFILMHSTSLML. The Cytoplasmic portion of the chain corresponds to 279-291; it reads SSPTLKRILKGKC.

The protein belongs to the G-protein coupled receptor T2R family. In terms of assembly, interacts with RTP3 and RTP4.

It localises to the cell membrane. In terms of biological role, receptor that may play a role in the perception of bitterness and is gustducin-linked. May play a role in sensing the chemical composition of the gastrointestinal content. The activity of this receptor may stimulate alpha gustducin, mediate PLC-beta-2 activation and lead to the gating of TRPM5. The protein is Taste receptor type 2 member 16 (TAS2R16) of Gorilla gorilla gorilla (Western lowland gorilla).